We begin with the raw amino-acid sequence, 147 residues long: Nudix hydrolase 1 (147 aa).

An N-acetylserine modification is found at Ser-2. Positions 7–140 (IPRVAVVVFI…EKLFGSGFNP (134 aa)) constitute a Nudix hydrolase domain. The Nudix box signature appears at 41 to 62 (GHLEFGESFEECAAREVMEETG). Positions 56 and 60 each coordinate Mg(2+).

This sequence belongs to the Nudix hydrolase family. As to quaternary structure, homodimer. Mg(2+) serves as cofactor. Mn(2+) is required as a cofactor. Expressed in roots, stems and leaves.

It is found in the cytoplasm. The enzyme catalyses 7,8-dihydroneopterin 3'-triphosphate + H2O = 7,8-dihydroneopterin 3'-phosphate + diphosphate + H(+). It catalyses the reaction NAD(+) + H2O = beta-nicotinamide D-ribonucleotide + AMP + 2 H(+). It carries out the reaction NADH + H2O = reduced beta-nicotinamide D-ribonucleotide + AMP + 2 H(+). The catalysed reaction is 8-oxo-dGTP + H2O = 8-oxo-dGMP + diphosphate + H(+). Its function is as follows. Mediates the hydrolysis of some nucleoside diphosphate derivatives. Its substrate specificity is unclear. In vitro, it can use NTP, dNTP, 8-oxo-GTP, 8-oxo-dGTP, dGTP, dATP, dTTP or dihydroneopterin triphosphate (DHNTP) as substrate. Has some NADH pyrophosphatase activity in vitro; however, such activity may not be relevant in vivo due to the high concentration of manganese used during the experiments. Plays an important role in protection against oxidative DNA and RNA damage by removing oxidatively damaged form of guanine. The protein is Nudix hydrolase 1 (NUDT1) of Arabidopsis thaliana (Mouse-ear cress).